The sequence spans 91 residues: Small ribosomal subunit protein bS18 (91 aa).

The protein belongs to the bacterial ribosomal protein bS18 family. Part of the 30S ribosomal subunit. Forms a tight heterodimer with protein bS6.

Binds as a heterodimer with protein bS6 to the central domain of the 16S rRNA, where it helps stabilize the platform of the 30S subunit. The chain is Small ribosomal subunit protein bS18 from Syntrophotalea carbinolica (strain DSM 2380 / NBRC 103641 / GraBd1) (Pelobacter carbinolicus).